A 321-amino-acid polypeptide reads, in one-letter code: Secreted RxLR effector protein 71 (321 aa).

A signal peptide spans 1–23; the sequence is MRPTGWRWPVLSLLLVLLPFQAA. A RxLR motif is present at residues 84–87; that stretch reads RSLR. N114 carries an N-linked (GlcNAc...) asparagine glycan. Positions 210-237 are disordered; sequence VSLGRDGNGPVRGISSSPTRLTRPRMGG.

Belongs to the RxLR effector family.

The protein resides in the secreted. It localises to the host cell. In terms of biological role, secreted effector that partially suppresses the host cell death induced by cell death-inducing proteins. This is Secreted RxLR effector protein 71 from Plasmopara viticola (Downy mildew of grapevine).